The primary structure comprises 252 residues: Mannose-P-dolichol utilization defect 1 protein homolog (252 aa).

One can recognise a PQ-loop 1 domain in the interval 34–100 (KALLSKGLGL…HGYPFSAWGD (67 aa)). The next 7 helical transmembrane spans lie at 41–61 (LGLAIIAGSVLVKVPQVLKIL), 69–89 (INIVGVVLDLLAISFHLSYNF), 98–118 (WGDSTFLAIQTVTIAVLVLFF), 126–146 (GLFLVGYVVLMYVLNSGLTPM), 148–168 (VLFTIQSCNIPILLVGKLSQA), 180–200 (LSAATVIMMFAGSVARIFTSI), and 207–227 (MIILTFIASTFANSVILGQLI). The region spanning 157–211 (IPILLVGKLSQAYTNYQAGSTGQLSAATVIMMFAGSVARIFTSIQETGDFMIILT) is the PQ-loop 2 domain.

This sequence belongs to the MPDU1 (TC 2.A.43.3) family.

The protein localises to the membrane. The protein is Mannose-P-dolichol utilization defect 1 protein homolog of Drosophila melanogaster (Fruit fly).